A 539-amino-acid polypeptide reads, in one-letter code: Putative serine/threonine-protein kinase L670 (539 aa).

The 115-residue stretch at 1–115 (MSLFNNHPEL…ILKVFKFGLH (115 aa)) folds into the Cyclin N-terminal domain. The Protein kinase domain maps to 258 to 519 (MNVIEKLGIG…VLKIFSECFV (262 aa)). Residues 264–272 (LGIGSFGLV) and K285 contribute to the ATP site. The active-site Proton acceptor is D375.

The protein belongs to the protein kinase superfamily. Ser/Thr protein kinase family.

The catalysed reaction is L-seryl-[protein] + ATP = O-phospho-L-seryl-[protein] + ADP + H(+). It carries out the reaction L-threonyl-[protein] + ATP = O-phospho-L-threonyl-[protein] + ADP + H(+). The protein is Putative serine/threonine-protein kinase L670 of Acanthamoeba polyphaga mimivirus (APMV).